The sequence spans 156 residues: Large ribosomal subunit protein uL15 (156 aa).

A compositionally biased stretch (basic and acidic residues) spans 1-13 (MKLNEIKDNEGAT). The interval 1–39 (MKLNEIKDNEGATKNRKRLGRGIGSGSGKTAGRGVKGQK) is disordered. Gly residues predominate over residues 21-35 (RGIGSGSGKTAGRGV).

It belongs to the universal ribosomal protein uL15 family. In terms of assembly, part of the 50S ribosomal subunit.

Its function is as follows. Binds to the 23S rRNA. In Rhizobium meliloti (strain 1021) (Ensifer meliloti), this protein is Large ribosomal subunit protein uL15.